We begin with the raw amino-acid sequence, 563 residues long: Arginine--tRNA ligase (563 aa).

Residues 121-131 (PNIAKPFSIGH) carry the 'HIGH' region motif.

Belongs to the class-I aminoacyl-tRNA synthetase family. In terms of assembly, monomer.

It localises to the cytoplasm. It carries out the reaction tRNA(Arg) + L-arginine + ATP = L-arginyl-tRNA(Arg) + AMP + diphosphate. This chain is Arginine--tRNA ligase, found in Streptococcus pyogenes serotype M1.